The following is a 306-amino-acid chain: Ribonuclease Z (306 aa).

Zn(2+) is bound by residues histidine 63, histidine 65, aspartate 67, histidine 68, histidine 140, aspartate 211, and histidine 269. The active-site Proton acceptor is the aspartate 67.

This sequence belongs to the RNase Z family. Homodimer. Requires Zn(2+) as cofactor.

The catalysed reaction is Endonucleolytic cleavage of RNA, removing extra 3' nucleotides from tRNA precursor, generating 3' termini of tRNAs. A 3'-hydroxy group is left at the tRNA terminus and a 5'-phosphoryl group is left at the trailer molecule.. Its function is as follows. Zinc phosphodiesterase, which displays some tRNA 3'-processing endonuclease activity. Probably involved in tRNA maturation, by removing a 3'-trailer from precursor tRNA. This is Ribonuclease Z from Listeria monocytogenes serotype 4a (strain HCC23).